The chain runs to 415 residues: Transfer protein TraSA (415 aa).

A FtsK domain is found at Asp127 to Asn326. An ATP-binding site is contributed by Gly145–Ser152.

This chain is Transfer protein TraSA (traSA), found in Streptomyces ambofaciens.